Reading from the N-terminus, the 153-residue chain is Probable inactive ribonuclease-like protein 13 (153 aa).

An N-terminal signal peptide occupies residues 1 to 22 (MAPDVAWLLVLPLVFRPTLVTG).

It belongs to the pancreatic ribonuclease family.

It is found in the secreted. In terms of biological role, does not exhibit any ribonuclease activity. This Mus musculus (Mouse) protein is Probable inactive ribonuclease-like protein 13 (Rnase13).